A 338-amino-acid polypeptide reads, in one-letter code: Phosphatidate cytidylyltransferase, mitochondrial (338 aa).

It belongs to the TAM41 family. Mg(2+) is required as a cofactor.

The protein resides in the mitochondrion inner membrane. It carries out the reaction a 1,2-diacyl-sn-glycero-3-phosphate + CTP + H(+) = a CDP-1,2-diacyl-sn-glycerol + diphosphate. It functions in the pathway phospholipid metabolism; CDP-diacylglycerol biosynthesis; CDP-diacylglycerol from sn-glycerol 3-phosphate: step 3/3. Catalyzes the conversion of phosphatidic acid (PA) to CDP-diacylglycerol (CDP-DAG), an essential intermediate in the synthesis of phosphatidylglycerol, cardiolipin and phosphatidylinositol. The chain is Phosphatidate cytidylyltransferase, mitochondrial (tamm41) from Xenopus laevis (African clawed frog).